We begin with the raw amino-acid sequence, 198 residues long: Endoribonuclease YbeY (198 aa).

Residues H156, H160, and H166 each coordinate Zn(2+).

It belongs to the endoribonuclease YbeY family. The cofactor is Zn(2+).

Its subcellular location is the cytoplasm. Single strand-specific metallo-endoribonuclease involved in late-stage 70S ribosome quality control and in maturation of the 3' terminus of the 16S rRNA. The protein is Endoribonuclease YbeY of Cupriavidus necator (strain ATCC 17699 / DSM 428 / KCTC 22496 / NCIMB 10442 / H16 / Stanier 337) (Ralstonia eutropha).